We begin with the raw amino-acid sequence, 487 residues long: Glutamyl-tRNA(Gln) amidotransferase subunit A (487 aa).

Residues K82 and S157 each act as charge relay system in the active site. S181 (acyl-ester intermediate) is an active-site residue.

This sequence belongs to the amidase family. GatA subfamily. Heterotrimer of A, B and C subunits.

The catalysed reaction is L-glutamyl-tRNA(Gln) + L-glutamine + ATP + H2O = L-glutaminyl-tRNA(Gln) + L-glutamate + ADP + phosphate + H(+). In terms of biological role, allows the formation of correctly charged Gln-tRNA(Gln) through the transamidation of misacylated Glu-tRNA(Gln) in organisms which lack glutaminyl-tRNA synthetase. The reaction takes place in the presence of glutamine and ATP through an activated gamma-phospho-Glu-tRNA(Gln). This is Glutamyl-tRNA(Gln) amidotransferase subunit A from Fusobacterium nucleatum subsp. nucleatum (strain ATCC 25586 / DSM 15643 / BCRC 10681 / CIP 101130 / JCM 8532 / KCTC 2640 / LMG 13131 / VPI 4355).